Here is a 487-residue protein sequence, read N- to C-terminus: Cyclic AMP-dependent transcription factor ATF-2 (487 aa).

A C2H2-type zinc finger spans residues 7–31 (FLCTAPGCGQRFTNEDHLAVHKHKH). 2 disordered regions span residues 106-132 (EEPS…DEKE) and 267-354 (QHPQ…CRQK). The segment covering 298–319 (QQPATSTTETPASPAQPTQQTP) has biased composition (low complexity). Basic and acidic residues predominate over residues 328 to 345 (AANEDPDEKRRKFLERNR). A bZIP domain is found at 334 to 397 (DEKRRKFLER…AQLKQLLLAH (64 aa)). A basic motif region spans residues 336 to 356 (KRRKFLERNRAAASRCRQKRK). Residues 362 to 390 (LEKKAEDLSSLNGQLQNEVTLLRNEVAQL) are leucine-zipper. The Nuclear export signal signature appears at 387–396 (VAQLKQLLLA). Residues 407–487 (KKSGYHTADK…PPSQAQPSGS (81 aa)) are disordered. The segment covering 425 to 436 (VPSSPHTEAIQH) has biased composition (polar residues). Residues 437 to 449 (SSVSTSNGVSSTS) show a composition bias toward low complexity. Polar residues predominate over residues 457–468 (SVLTQLADQSSE).

The protein belongs to the bZIP family. ATF subfamily. Binds DNA as a dimer and can form a homodimer in the absence of DNA. Can form a heterodimer with JUN. Heterodimerization is essential for its transcriptional activity.

The protein resides in the nucleus. It localises to the cytoplasm. The protein localises to the mitochondrion outer membrane. In terms of biological role, transcriptional activator which regulates the transcription of various genes, including those involved in anti-apoptosis, cell growth, and DNA damage response. Dependent on its binding partner, binds to CRE (cAMP response element) consensus sequences (5'-TGACGTCA-3') or to AP-1 (activator protein 1) consensus sequences (5'-TGACTCA-3'). This is Cyclic AMP-dependent transcription factor ATF-2 (ATF2) from Gallus gallus (Chicken).